The chain runs to 229 residues: Potassium/proton antiporter CemA (229 aa).

Transmembrane regions (helical) follow at residues 7-27 (FTPLFYLASIVFLPWWISFSV), 107-127 (ILHFSTNIICFIILSGYSILG), and 189-209 (IISGLVSTFPVILDTIFKYWI).

This sequence belongs to the CemA family.

It localises to the plastid. The protein localises to the chloroplast inner membrane. It carries out the reaction K(+)(in) + H(+)(out) = K(+)(out) + H(+)(in). In terms of biological role, contributes to K(+)/H(+) antiport activity by supporting proton efflux to control proton extrusion and homeostasis in chloroplasts in a light-dependent manner to modulate photosynthesis. Prevents excessive induction of non-photochemical quenching (NPQ) under continuous-light conditions. Indirectly promotes efficient inorganic carbon uptake into chloroplasts. The chain is Potassium/proton antiporter CemA from Atropa belladonna (Belladonna).